The primary structure comprises 392 residues: Antitrypsin (392 aa).

The signal sequence occupies residues 1–16; sequence MKTIICLFTIAIAAMA.

It belongs to the serpin family. In terms of tissue distribution, hemolymph.

The protein localises to the secreted. In terms of biological role, may play a role in the prophenoloxidase activating system in the silkworm hemolymph. In Bombyx mori (Silk moth), this protein is Antitrypsin.